Reading from the N-terminus, the 292-residue chain is Cyclin-dependent kinase 5 (292 aa).

The Protein kinase domain occupies 4 to 286; the sequence is YEKLEKIGEG…AEEALQHPYF (283 aa). Residues 10–18 and Lys33 contribute to the ATP site; that span reads IGEGTYGTV. The residue at position 15 (Tyr15) is a Phosphotyrosine; by ABL1, EPHA4 and FYN. Thr17 bears the Phosphothreonine mark. Lys56 is subject to N6-acetyllysine. Ser72 is modified (phosphoserine). Asp126 acts as the Proton acceptor in catalysis. Position 159 is a phosphoserine (Ser159).

It belongs to the protein kinase superfamily. CMGC Ser/Thr protein kinase family. CDC2/CDKX subfamily. As to quaternary structure, heterodimer composed of a catalytic subunit CDK5 and a regulatory subunit CDK5R1 (p25) and macromolecular complex composed of at least CDK5, CDK5R1 (p35) and CDK5RAP1 or CDK5RAP2 or CDK5RAP3. Only the heterodimer shows kinase activity. Under neurotoxic stress and neuronal injury conditions, p35 is cleaved by calpain to generate p25 that hyperactivates CDK5, that becomes functionally disabled and often toxic. Found in a trimolecular complex with CABLES1 and ABL1. Interacts with CABLES1 and CABLES2. Interacts with AATK and GSTP1. Binds to HDAC1 when in complex with p25. Interaction with myristoylation p35 promotes CDK5 association with membranes. Both isoforms 1 and 2 interacts with beta-catenin/CTNNB1. Interacts with delta-catenin/CTNND2 and APEX1. Interacts with P53/TP53 in neurons. Interacts with EPHA4; may mediate the activation of NGEF by EPHA4. Interacts with PTK2/FAK1. The complex p35/CDK5 interacts with CLOCK. Interacts with HTR6. In terms of processing, phosphorylation on Tyr-15 by ABL1 and FYN, and on Ser-159 by casein kinase 1 promotes kinase activity. By contrast, phosphorylation at Thr-14 inhibits activity. Phosphorylation at Ser-159 is essential for maximal catalytic activity. As to expression, ubiquitously expressed. Accumulates in cortical neurons (at protein level). Expressed in the testis, skeletal muscle, colon, bone marrow and ovary.

Its subcellular location is the cytoplasm. The protein localises to the nucleus. It localises to the cell membrane. The protein resides in the perikaryon. It is found in the cell projection. Its subcellular location is the lamellipodium. The protein localises to the growth cone. It localises to the postsynaptic density. The protein resides in the synapse. The catalysed reaction is L-seryl-[protein] + ATP = O-phospho-L-seryl-[protein] + ADP + H(+). The enzyme catalyses L-threonyl-[protein] + ATP = O-phospho-L-threonyl-[protein] + ADP + H(+). With respect to regulation, inhibited by 2-(1-ethyl-2-hydroxyethylamino)-6-benzylamino-9-isopropylpurine (roscovitine), 1-isopropyl-4-aminobenzyl-6-ether-linked benzimidazoles, resveratrol, AT-7519 and olomoucine. Activated by CDK5R1 (p35) and CDK5R2 (p39) during the development of the nervous system; degradation of CDK5R1 (p35) and CDK5R2 (p39) by proteasome result in down regulation of kinase activity, during this process, CDK5 phosphorylates p35 and induces its ubiquitination and subsequent degradation. Kinase activity is mainly determined by the amount of p35 available and subcellular location; reversible association to plasma membrane inhibits activity. Long-term inactivation as well as CDK5R1 (p25)-mediated hyperactivation of CDK5 triggers cell death. The pro-death activity of hyperactivated CDK5 is suppressed by membrane association of CDK5, via myristoylation of p35. Brain-derived neurotrophic factor, glial-derived neurotrophic factor, nerve growth factor (NGF), retinoic acid, laminin and neuregulin promote activity. Neurotoxicity enhances nuclear activity, thus leading to MEF2 phosphorylation and inhibition prior to apoptosis of cortical neurons. Repression by GSTP1 via p25/p35 translocation prevents neurodegeneration. Proline-directed serine/threonine-protein kinase essential for neuronal cell cycle arrest and differentiation and may be involved in apoptotic cell death in neuronal diseases by triggering abortive cell cycle re-entry. Interacts with D1 and D3-type G1 cyclins. Phosphorylates SRC, NOS3, VIM/vimentin, p35/CDK5R1, MEF2A, SIPA1L1, SH3GLB1, PXN, PAK1, MCAM/MUC18, SEPT5, SYN1, DNM1, AMPH, SYNJ1, CDK16, RAC1, RHOA, CDC42, TONEBP/NFAT5, MAPT/TAU, MAP1B, histone H1, p53/TP53, HDAC1, APEX1, PTK2/FAK1, huntingtin/HTT, ATM, MAP2, NEFH and NEFM. Regulates several neuronal development and physiological processes including neuronal survival, migration and differentiation, axonal and neurite growth, synaptogenesis, oligodendrocyte differentiation, synaptic plasticity and neurotransmission, by phosphorylating key proteins. Negatively regulates the CACNA1B/CAV2.2 -mediated Ca(2+) release probability at hippocampal neuronal soma and synaptic terminals. Activated by interaction with CDK5R1 (p35) and CDK5R2 (p39), especially in postmitotic neurons, and promotes CDK5R1 (p35) expression in an autostimulation loop. Phosphorylates many downstream substrates such as Rho and Ras family small GTPases (e.g. PAK1, RAC1, RHOA, CDC42) or microtubule-binding proteins (e.g. MAPT/TAU, MAP2, MAP1B), and modulates actin dynamics to regulate neurite growth and/or spine morphogenesis. Also phosphorylates exocytosis associated proteins such as MCAM/MUC18, SEPT5, SYN1, and CDK16/PCTAIRE1 as well as endocytosis associated proteins such as DNM1, AMPH and SYNJ1 at synaptic terminals. In the mature central nervous system (CNS), regulates neurotransmitter movements by phosphorylating substrates associated with neurotransmitter release and synapse plasticity; synaptic vesicle exocytosis, vesicles fusion with the presynaptic membrane, and endocytosis. Promotes cell survival by activating anti-apoptotic proteins BCL2 and STAT3, and negatively regulating of JNK3/MAPK10 activity. Phosphorylation of p53/TP53 in response to genotoxic and oxidative stresses enhances its stabilization by preventing ubiquitin ligase-mediated proteasomal degradation, and induces transactivation of p53/TP53 target genes, thus regulating apoptosis. Phosphorylation of p35/CDK5R1 enhances its stabilization by preventing calpain-mediated proteolysis producing p25/CDK5R1 and avoiding ubiquitin ligase-mediated proteasomal degradation. During aberrant cell-cycle activity and DNA damage, p25/CDK5 activity elicits cell-cycle activity and double-strand DNA breaks that precedes neuronal death by deregulating HDAC1. DNA damage triggered phosphorylation of huntingtin/HTT in nuclei of neurons protects neurons against polyglutamine expansion as well as DNA damage mediated toxicity. Phosphorylation of PXN reduces its interaction with PTK2/FAK1 in matrix-cell focal adhesions (MCFA) during oligodendrocytes (OLs) differentiation. Negative regulator of Wnt/beta-catenin signaling pathway. Activator of the GAIT (IFN-gamma-activated inhibitor of translation) pathway, which suppresses expression of a post-transcriptional regulon of proinflammatory genes in myeloid cells; phosphorylates the linker domain of glutamyl-prolyl tRNA synthetase (EPRS) in a IFN-gamma-dependent manner, the initial event in assembly of the GAIT complex. Phosphorylation of SH3GLB1 is required for autophagy induction in starved neurons. Phosphorylation of TONEBP/NFAT5 in response to osmotic stress mediates its rapid nuclear localization. MEF2 is inactivated by phosphorylation in nucleus in response to neurotoxin, thus leading to neuronal apoptosis. APEX1 AP-endodeoxyribonuclease is repressed by phosphorylation, resulting in accumulation of DNA damage and contributing to neuronal death. NOS3 phosphorylation down regulates NOS3-derived nitrite (NO) levels. SRC phosphorylation mediates its ubiquitin-dependent degradation and thus leads to cytoskeletal reorganization. May regulate endothelial cell migration and angiogenesis via the modulation of lamellipodia formation. Involved in dendritic spine morphogenesis by mediating the EFNA1-EPHA4 signaling. The complex p35/CDK5 participates in the regulation of the circadian clock by modulating the function of CLOCK protein: phosphorylates CLOCK at 'Thr-451' and 'Thr-461' and regulates the transcriptional activity of the CLOCK-BMAL1 heterodimer in association with altered stability and subcellular distribution. This Homo sapiens (Human) protein is Cyclin-dependent kinase 5.